We begin with the raw amino-acid sequence, 322 residues long: NADH-quinone oxidoreductase subunit H (322 aa).

8 helical membrane-spanning segments follow: residues 12 to 32, 79 to 99, 111 to 131, 151 to 171, 183 to 203, 234 to 254, 262 to 282, and 301 to 321; these read VGKA…MSFI, IFIL…AVVP, VGLL…LFAG, LSYE…TGSF, LWNV…GVAV, FFVG…TLFF, LPPF…FILL, and VCLP…LINV.

It belongs to the complex I subunit 1 family. As to quaternary structure, NDH-1 is composed of 14 different subunits. Subunits NuoA, H, J, K, L, M, N constitute the membrane sector of the complex.

It localises to the cell inner membrane. It catalyses the reaction a quinone + NADH + 5 H(+)(in) = a quinol + NAD(+) + 4 H(+)(out). In terms of biological role, NDH-1 shuttles electrons from NADH, via FMN and iron-sulfur (Fe-S) centers, to quinones in the respiratory chain. The immediate electron acceptor for the enzyme in this species is believed to be ubiquinone. Couples the redox reaction to proton translocation (for every two electrons transferred, four hydrogen ions are translocated across the cytoplasmic membrane), and thus conserves the redox energy in a proton gradient. This subunit may bind ubiquinone. This Aeromonas salmonicida (strain A449) protein is NADH-quinone oxidoreductase subunit H.